The primary structure comprises 289 residues: ATP synthase gamma chain (289 aa).

It belongs to the ATPase gamma chain family. In terms of assembly, F-type ATPases have 2 components, CF(1) - the catalytic core - and CF(0) - the membrane proton channel. CF(1) has five subunits: alpha(3), beta(3), gamma(1), delta(1), epsilon(1). CF(0) has three main subunits: a, b and c.

Its subcellular location is the cell membrane. Its function is as follows. Produces ATP from ADP in the presence of a proton gradient across the membrane. The gamma chain is believed to be important in regulating ATPase activity and the flow of protons through the CF(0) complex. The chain is ATP synthase gamma chain from Mycoplasmopsis synoviae (strain 53) (Mycoplasma synoviae).